Reading from the N-terminus, the 629-residue chain is tRNA uridine 5-carboxymethylaminomethyl modification enzyme MnmG (629 aa).

Residues Gly13–Gly18, Val125, and Ser180 contribute to the FAD site. Gly273–Phe287 provides a ligand contact to NAD(+). Gln370 is an FAD binding site.

It belongs to the MnmG family. As to quaternary structure, homodimer. Heterotetramer of two MnmE and two MnmG subunits. FAD serves as cofactor.

Its subcellular location is the cytoplasm. In terms of biological role, NAD-binding protein involved in the addition of a carboxymethylaminomethyl (cmnm) group at the wobble position (U34) of certain tRNAs, forming tRNA-cmnm(5)s(2)U34. This chain is tRNA uridine 5-carboxymethylaminomethyl modification enzyme MnmG, found in Escherichia coli O45:K1 (strain S88 / ExPEC).